We begin with the raw amino-acid sequence, 385 residues long: Succinate--CoA ligase [ADP-forming] subunit beta (385 aa).

The ATP-grasp domain maps to 9-243 (KEILSAYGIP…YSQLDTLEIN (235 aa)). ATP is bound by residues Lys-45, 52–54 (GRG), Glu-98, Val-101, and Glu-106. Mg(2+)-binding residues include Asn-198 and Asp-212. Residues Asn-263 and 320-322 (GIM) each bind substrate.

It belongs to the succinate/malate CoA ligase beta subunit family. As to quaternary structure, heterotetramer of two alpha and two beta subunits. It depends on Mg(2+) as a cofactor.

It carries out the reaction succinate + ATP + CoA = succinyl-CoA + ADP + phosphate. The catalysed reaction is GTP + succinate + CoA = succinyl-CoA + GDP + phosphate. Its pathway is carbohydrate metabolism; tricarboxylic acid cycle; succinate from succinyl-CoA (ligase route): step 1/1. Functionally, succinyl-CoA synthetase functions in the citric acid cycle (TCA), coupling the hydrolysis of succinyl-CoA to the synthesis of either ATP or GTP and thus represents the only step of substrate-level phosphorylation in the TCA. The beta subunit provides nucleotide specificity of the enzyme and binds the substrate succinate, while the binding sites for coenzyme A and phosphate are found in the alpha subunit. The chain is Succinate--CoA ligase [ADP-forming] subunit beta from Geobacter sulfurreducens (strain ATCC 51573 / DSM 12127 / PCA).